Here is an 805-residue protein sequence, read N- to C-terminus: Na(+)/H(+) antiporter subunit A1 (805 aa).

Transmembrane regions (helical) follow at residues 1–21, 30–50, 79–99, 117–137, 166–186, 201–221, 226–246, 265–285, 300–320, 337–357, 377–397, 427–447, 480–500, 531–551, 591–611, 623–643, 646–666, 671–691, 707–727, and 766–786; these read MSLL…IPFV, LGWF…SYIS, LGLL…LYSI, LFMG…LYLF, MLVT…LSIA, EIQT…GAMT, FPFY…SAYL, IFAV…ITLF, ILAF…GVGA, FTAA…LFMI, LTIM…MAGI, LGIL…VYSI, ILAI…GSII, LGIY…IYLL, LVII…VTPF, PFEL…IFAK, LFSI…FIFF, LALT…LCFY, LVNI…GLIA, and TLFE…MIKL.

The protein belongs to the CPA3 antiporters (TC 2.A.63) subunit A family. In terms of assembly, may form a heterooligomeric complex that consists of seven subunits: mnhA1, mnhB1, mnhC1, mnhD1, mnhE1, mnhF1 and mnhG1.

Its subcellular location is the cell membrane. Its function is as follows. Mnh complex is a Na(+)/H(+) antiporter involved in Na(+) excretion. This is Na(+)/H(+) antiporter subunit A1 (mnhA1) from Staphylococcus saprophyticus subsp. saprophyticus (strain ATCC 15305 / DSM 20229 / NCIMB 8711 / NCTC 7292 / S-41).